The sequence spans 215 residues: Pyrrolidone-carboxylate peptidase (215 aa).

Residues Glu-80, Cys-143, and His-167 contribute to the active site.

This sequence belongs to the peptidase C15 family. As to quaternary structure, homotetramer.

The protein localises to the cytoplasm. It carries out the reaction Release of an N-terminal pyroglutamyl group from a polypeptide, the second amino acid generally not being Pro.. Its function is as follows. Removes 5-oxoproline from various penultimate amino acid residues except L-proline. This Bacillus cereus (strain ATCC 14579 / DSM 31 / CCUG 7414 / JCM 2152 / NBRC 15305 / NCIMB 9373 / NCTC 2599 / NRRL B-3711) protein is Pyrrolidone-carboxylate peptidase.